Here is a 444-residue protein sequence, read N- to C-terminus: DNA repair protein RadA (444 aa).

The segment at 8 to 25 (CSNCGNISPKWSGQCFDC) adopts a C4-type zinc-finger fold. 89-96 (GDPGIGKS) provides a ligand contact to ATP. Positions 248-252 (KNRFG) match the RadA KNRFG motif motif. The segment at 347–444 (EVYLSIAGGL…HLKDLKEIIK (98 aa)) is lon-protease-like.

It belongs to the RecA family. RadA subfamily.

Functionally, DNA-dependent ATPase involved in processing of recombination intermediates, plays a role in repairing DNA breaks. Stimulates the branch migration of RecA-mediated strand transfer reactions, allowing the 3' invading strand to extend heteroduplex DNA faster. Binds ssDNA in the presence of ADP but not other nucleotides, has ATPase activity that is stimulated by ssDNA and various branched DNA structures, but inhibited by SSB. Does not have RecA's homology-searching function. This is DNA repair protein RadA from Rickettsia conorii (strain ATCC VR-613 / Malish 7).